The primary structure comprises 846 residues: ATR-interacting protein mus304 (846 aa).

Disordered stretches follow at residues D20–I40, Q90–P109, and E135–T162. A compositionally biased stretch (low complexity) spans T144–T162. Coiled coils occupy residues A168 to E240 and E327 to K359. The EEXXXDL motif motif lies at E504–L510. A disordered region spans residues G651–G681. Positions G655–S676 are enriched in low complexity.

It belongs to the ATRIP family. As to quaternary structure, interacts with ATR/mei-41. Highly expressed in the oocyte and nurse cells from stage 5 onward and in embryos prior to during nuclear division 14. Then, it decreases to background levels during interphase 14. Weakly or not expressed in stage embryos and imaginal disks.

It is found in the cytoplasm. Functionally, DNA damage checkpoint protein required for chromosome break repair and for genomic stability during development. This chain is ATR-interacting protein mus304 (mus304), found in Drosophila melanogaster (Fruit fly).